We begin with the raw amino-acid sequence, 193 residues long: Bradykinin-potentiating and C-type natriuretic peptides (193 aa).

An N-terminal signal peptide occupies residues 1 to 23; it reads MFVSRLAASGLLLLALLALSLDG. A propeptide spanning residues 24–27 is cleaved from the precursor; the sequence is KPVH. The tract at residues 25 to 173 is disordered; sequence PVHQSKPGRS…RMKGLAKKAM (149 aa). Gln28 bears the Pyrrolidone carboxylic acid mark. 2 propeptides span residues 40–43 and 58–64; these read LSAQ and LSVQQWS. Position 65 is a pyrrolidone carboxylic acid (Gln65). Positions 75 to 169 are excised as a propeptide; that stretch reads VVVQPHESPA…GGARRMKGLA (95 aa). Positions 95-123 are enriched in low complexity; that stretch reads SPGPEAASGPAAPHRLPKSKGASATSAAS. The span at 125–150 shows a compositional bias: basic and acidic residues; the sequence is PMRDLRTDGKQERQKWGRMVQPDHHA. A compositionally biased stretch (gly residues) spans 152–162; the sequence is PGGGGGGGGGA. Residues 163 to 173 are compositionally biased toward basic residues; the sequence is RRMKGLAKKAM. An intrachain disulfide couples Cys177 to Cys193.

This sequence in the N-terminal section; belongs to the bradykinin-potentiating peptide family. In the C-terminal section; belongs to the natriuretic peptide family. As to expression, expressed by the venom gland.

It localises to the secreted. In terms of biological role, bradykinin-potentiating peptide both inhibits the activity of the angiotensin-converting enzyme (ACE) and enhances the action of bradykinin by inhibiting the peptidases that inactivate it. It acts as an indirect hypotensive agent. Neither synthetic Tf1, nor synthetic Tf2 show bradykinin-potentiating effects. Functionally, has a vasorelaxant activity in rat aortic strips and a diuretic potency in anesthetized rats. Has a vasorelaxant activity in rat aortic strips and a diuretic potency in anesthetized rats. Is as potent as Tf-CNP. This chain is Bradykinin-potentiating and C-type natriuretic peptides, found in Protobothrops flavoviridis (Habu).